We begin with the raw amino-acid sequence, 976 residues long: Protein phosphatase 1 regulatory subunit 12B (976 aa).

Residues 1-24 (MAELEHLGGKRAESARARRAEQLR) show a composition bias toward basic and acidic residues. Positions 1 to 52 (MAELEHLGGKRAESARARRAEQLRRWRGSLTEQEPAERQGAGRQLQTRRGSP) are disordered. The residue at position 29 (Ser29) is a Phosphoserine. ANK repeat units lie at residues 57–86 (EDGA…DINT), 90–119 (DGLT…NVNQ), 123–152 (EGWT…SVGI), 216–245 (SGAT…ELNV), and 249–278 (DGWT…DMDI). The segment at 342-489 (EEIPKSQDTE…LDDKDKEREN (148 aa)) is disordered. A compositionally biased stretch (acidic residues) spans 362 to 374 (SEEEEGEDEVSES). Basic and acidic residues predominate over residues 375-385 (ETEKEADKKPE). The span at 411–423 (FSASSARRLSSLF) shows a compositional bias: low complexity. Phosphothreonine is present on Thr444. Residues 465 to 477 (SSIYRSSSSPRIS) are compositionally biased toward low complexity. Residues 480–489 (LDDKDKEREN) are compositionally biased toward basic and acidic residues. Position 502 is a phosphoserine (Ser502). Positions 503–873 (STSDIEEKEN…LTSRVEEDSN (371 aa)) are disordered. Residues 538–564 (ETPQTIAPSTYTSTYLKRTPYKSQADS) show a composition bias toward polar residues. Residues 622-631 (VRDEEAESLR) show a composition bias toward basic and acidic residues. The span at 632 to 642 (KARSRQARQTR) shows a compositional bias: basic residues. Thr645 carries the phosphothreonine modification. Positions 655–679 (EAEKTFSRSRAERQAQEQPGEKLED) are enriched in basic and acidic residues. Composition is skewed to polar residues over residues 722–739 (DKPT…SLYT) and 747–763 (SRAS…STHA). A compositionally biased stretch (basic and acidic residues) spans 765-777 (AAKEMDTSEKGEA). Residues 791–801 (ERRRAKDRRRG) show a composition bias toward basic residues. Phosphothreonine is present on Thr802. A compositionally biased stretch (basic and acidic residues) spans 818–830 (EEVKEALHERLSR). At Ser833 the chain carries Phosphoserine. Residues 844–860 (YSDRASARARREAREAR) show a composition bias toward basic and acidic residues. Ser941 carries the phosphoserine modification.

As to quaternary structure, PP1 comprises a catalytic subunit, PPP1CA, PPP1CB or PPP1CC, and one or several targeting or regulatory subunits. PPP1R12B mediates binding to myosin. Isoform 3 and isoform 4 bind PPP1R12A, but not isoform 1 of PPP1R12B itself. Binds IL16.

Its subcellular location is the cytoplasm. It is found in the cytoskeleton. It localises to the stress fiber. In terms of biological role, regulates myosin phosphatase activity. Augments Ca(2+) sensitivity of the contractile apparatus. This Mus musculus (Mouse) protein is Protein phosphatase 1 regulatory subunit 12B (Ppp1r12b).